The chain runs to 668 residues: WD repeat-containing protein 48 homolog (668 aa).

WD repeat units lie at residues 26-65 (QHRN…SEKY), 71-110 (HHND…CMST), 113-152 (THRD…ALTA), 164-203 (GSKD…RRMK), 206-245 (GHTE…CVQT), 248-287 (VHKE…NKTL), 290-329 (EEQA…RCTL), and 350-389 (KGGA…KKEQ). Residues 592-616 (ETTPSGGNANNSLQNSQSDANSEGS) form a disordered region.

It belongs to the WD repeat WDR48 family. Catalytic component of the Usp12-46 deubiquitylase complex consisting of Usp12-46, Wdr20 and Uaf1; regulatory subunit that, together wtih Wdr20, stabilizes Usp12-46. The Usp12-46 deubiquitylase complex associates with arr/arrow; the interaction leads to deubiquitination and stabilization of arr/arrow.

Its function is as follows. Regulatory component of the Usp12-46 deubiquitylase complex. activates deubiquitination by increasing the catalytic turnover without increasing the affinity of deubiquitinating enzymes for the substrate. The complex deubiquitylates the wg/wingless-signaling receptor arr/arrow, which stabilizes the receptor and increases its concentration at the cell surface; this enhances the sensitivity of cells to wg/wingless-signal stimulation. This increases the amplitude and spatial range of the signaling response to the wg/wingless morphogen gradient, facilitating the precise concentration-dependent regulation of its target genes. Together with Wdr20 and Usp12-46 required for wg/wingless-mediated signaling in the wing imaginal disc and for wg/wingless-dependent regulation of intestinal stem cell proliferation. The protein is WD repeat-containing protein 48 homolog of Drosophila melanogaster (Fruit fly).